We begin with the raw amino-acid sequence, 132 residues long: MHETDMTRALIQTLRDWWQSQPGQPQIARVHLVVGQFTCVEPASLTFAYAAQTQGTFLQGSQLVIRETPLIAYCHPCGQEYKPEIGRRYACPNCGSPMEEIRSGRELKIDYIEIDYIECSTNFTPPAQPEVA.

Residue His-2 coordinates Ni(2+). 4 residues coordinate Zn(2+): Cys-74, Cys-77, Cys-91, and Cys-94.

This sequence belongs to the HypA/HybF family.

Its function is as follows. Involved in the maturation of [NiFe] hydrogenases. Required for nickel insertion into the metal center of the hydrogenase. The protein is Hydrogenase maturation factor HypA of Synechococcus sp. (strain JA-2-3B'a(2-13)) (Cyanobacteria bacterium Yellowstone B-Prime).